Reading from the N-terminus, the 276-residue chain is Putative translation initiation factor eIF-2B subunit 2-like (276 aa).

Belongs to the eIF-2B alpha/beta/delta subunits family. Complex of two different subunits.

Catalyzes the exchange of initiation factor 2-bound GDP for GTP. The chain is Putative translation initiation factor eIF-2B subunit 2-like from Pyrococcus abyssi (strain GE5 / Orsay).